Consider the following 265-residue polypeptide: Protein B8 (265 aa).

This Homo sapiens (Human) protein is Protein B8 (B8).